Here is a 304-residue protein sequence, read N- to C-terminus: Putative S-adenosyl-L-methionine-dependent methyltransferase MAP_3385 (304 aa).

S-adenosyl-L-methionine is bound by residues D129 and 158 to 159 (DL).

This sequence belongs to the UPF0677 family.

Exhibits S-adenosyl-L-methionine-dependent methyltransferase activity. The polypeptide is Putative S-adenosyl-L-methionine-dependent methyltransferase MAP_3385 (Mycolicibacterium paratuberculosis (strain ATCC BAA-968 / K-10) (Mycobacterium paratuberculosis)).